Here is an 806-residue protein sequence, read N- to C-terminus: Leucine--tRNA ligase (806 aa).

The 'HIGH' region signature appears at 38 to 48 (PYPSGEIHMGH). Residues 572 to 576 (KMSKS) carry the 'KMSKS' region motif. Lys-575 serves as a coordination point for ATP.

The protein belongs to the class-I aminoacyl-tRNA synthetase family.

It localises to the cytoplasm. It catalyses the reaction tRNA(Leu) + L-leucine + ATP = L-leucyl-tRNA(Leu) + AMP + diphosphate. The chain is Leucine--tRNA ligase from Helicobacter pylori (strain J99 / ATCC 700824) (Campylobacter pylori J99).